The sequence spans 85 residues: RNA-binding protein Hfq (85 aa).

In terms of domain architecture, Sm spans 9 to 69 (DQLLNTARKD…ISTIIPAKII (61 aa)).

This sequence belongs to the Hfq family. In terms of assembly, homohexamer.

Its function is as follows. RNA chaperone that binds small regulatory RNA (sRNAs) and mRNAs to facilitate mRNA translational regulation in response to envelope stress, environmental stress and changes in metabolite concentrations. Also binds with high specificity to tRNAs. This Leptospira interrogans serogroup Icterohaemorrhagiae serovar copenhageni (strain Fiocruz L1-130) protein is RNA-binding protein Hfq.